Reading from the N-terminus, the 496-residue chain is Genome polyprotein (496 aa).

The Extracellular portion of the chain corresponds to 1-447 (SRCTHLENRD…HTVLGGAFNS (447 aa)). 6 cysteine pairs are disulfide-bonded: Cys-3–Cys-30, Cys-60–Cys-116, Cys-60–Cys-121, Cys-74–Cys-105, Cys-92–Cys-116, and Cys-92–Cys-121. The interval 98–111 (DRGWGNHCGLFGKG) is fusion peptide. The N-linked (GlcNAc...) asparagine; by host glycan is linked to Asn-154. 2 cysteine pairs are disulfide-bonded: Cys-186/Cys-290 and Cys-307/Cys-338. A helical transmembrane segment spans residues 448 to 468 (IFGGVGFLPKLLMGVALAWLG). Residues 469–479 (LNTRNPTMSIS) lie on the Cytoplasmic side of the membrane. The helical transmembrane segment at 480 to 496 (FLLTGGLVLAMTLGVGA) threads the bilayer.

Homodimer; in the endoplasmic reticulum and Golgi. N-glycosylated.

The protein resides in the virion membrane. It localises to the host endoplasmic reticulum membrane. Its function is as follows. Binds to host cell surface receptor and mediates fusion between viral and cellular membranes. Envelope protein is synthesized in the endoplasmic reticulum in the form of heterodimer with protein prM. They play a role in virion budding in the ER, and the newly formed immature particle is covered with 60 spikes composed of heterodimer between precursor prM and envelope protein E. The virion is transported to the Golgi apparatus where the low pH causes dissociation of PrM-E heterodimers and formation of E homodimers. prM-E cleavage is ineficient, and many virions are only partially matured. These uncleaved prM would play a role in immune evasion. The polypeptide is Genome polyprotein (Louping ill virus (strain SB 526) (Li)).